The following is a 295-amino-acid chain: Lectin 11 (295 aa).

The Cytoplasmic segment spans residues 1 to 22 (MHYSHFYFIINNTNMTINAIPK). A helical membrane pass occupies residues 23-45 (LFATKNSISLSIVIFMYLLILVA). Residues 46 to 295 (NVKSDSSFNF…ILSWSFTSNM (250 aa)) are Extracellular-facing. Asparagine 152 carries an N-linked (GlcNAc...) asparagine glycan.

This sequence belongs to the leguminous lectin family.

The protein resides in the membrane. May be involved in arbuscular mycorrhizal (AM) symbiosis with AM fungi. The polypeptide is Lectin 11 (Medicago truncatula (Barrel medic)).